A 292-amino-acid chain; its full sequence is 4-hydroxy-tetrahydrodipicolinate synthase (292 aa).

T45 contacts pyruvate. Residue Y133 is the Proton donor/acceptor of the active site. The active-site Schiff-base intermediate with substrate is K161. Position 203 (I203) interacts with pyruvate.

It belongs to the DapA family. As to quaternary structure, homotetramer; dimer of dimers.

It localises to the cytoplasm. The catalysed reaction is L-aspartate 4-semialdehyde + pyruvate = (2S,4S)-4-hydroxy-2,3,4,5-tetrahydrodipicolinate + H2O + H(+). It participates in amino-acid biosynthesis; L-lysine biosynthesis via DAP pathway; (S)-tetrahydrodipicolinate from L-aspartate: step 3/4. Functionally, catalyzes the condensation of (S)-aspartate-beta-semialdehyde [(S)-ASA] and pyruvate to 4-hydroxy-tetrahydrodipicolinate (HTPA). This chain is 4-hydroxy-tetrahydrodipicolinate synthase, found in Shigella boydii serotype 18 (strain CDC 3083-94 / BS512).